The following is a 1279-amino-acid chain: Talin-A (1279 aa).

The FERM domain maps to 84–365; that stretch reads RPQKFKLLDG…GYIEIIMKAR (282 aa).

The protein resides in the cytoplasm. It is found in the cytoskeleton. Its subcellular location is the cell cortex. Its function is as follows. Actin-binding protein that may be involved in the control of cell motility and chemotaxis. This chain is Talin-A (talA), found in Dictyostelium discoideum (Social amoeba).